A 947-amino-acid polypeptide reads, in one-letter code: Vacuolar membrane protease (947 aa).

Topologically, residues 1–15 are cytoplasmic; it reads MRFKALLRAIFRFRK. Residues 16 to 36 form a helical membrane-spanning segment; that stretch reads TNFSILLIITYAIIIALLVFD. At 37–358 the chain is on the vacuolar side; it reads RSRYKLDLPN…GLFFVVVDTK (322 aa). N-linked (GlcNAc...) asparagine glycosylation is found at asparagine 46, asparagine 92, asparagine 108, and asparagine 121. Residues histidine 156 and aspartate 168 each coordinate Zn(2+). Residue glutamate 200 is the Proton acceptor of the active site. Residues glutamate 201, glutamate 226, and histidine 300 each contribute to the Zn(2+) site. An N-linked (GlcNAc...) asparagine glycan is attached at asparagine 319. The chain crosses the membrane as a helical span at residues 359–379; it reads HLFYADIFMLIVGPILLMMKA. The Cytoplasmic segment spans residues 380–391; it reads HLDKRRRLERSR. A helical membrane pass occupies residues 392 to 412; that stretch reads LVQLRLLLSLGLSVVFLLLLT. Topologically, residues 413–428 are vacuolar; sequence KSLNSFNPFVYSADYR. Residues 429 to 449 traverse the membrane as a helical segment; the sequence is TPLTGLFLLFVTVNYLIVTLA. The Cytoplasmic portion of the chain corresponds to 450 to 458; that stretch reads ERLNPTESY. A helical membrane pass occupies residues 459–479; the sequence is KTVAINQIFIIAWLMQLYITL. Topologically, residues 480 to 489 are vacuolar; the sequence is RMAKSDFTLT. The helical transmembrane segment at 490–510 threads the bilayer; that stretch reads GTYPLSIFSGCLIVALSLGLF. The Cytoplasmic segment spans residues 511–601; it reads GTKNKAVNDA…DKNSDFSKHY (91 aa). Polar residues-rich tracts occupy residues 522 to 531 and 546 to 567; these read NSSVRYASSQ and NINQVRDTGNQEVTSNTNTDLH. Positions 522 to 573 are disordered; sequence NSSVRYASSQNDEDNPLPSQDRGENINQVRDTGNQEVTSNTNTDLHSNAEEV. Residues 602 to 622 traverse the membrane as a helical segment; it reads NWIVQFLCIVPISSFIFLFSL. At 623-641 the chain is on the vacuolar side; the sequence is DYTLDAIHKMVQETTDDVQ. The chain crosses the membrane as a helical span at residues 642–662; sequence LICIIITIGVILLALPILPFI. Residues 663-669 are Cytoplasmic-facing; sequence SKLNYQS. A helical transmembrane segment spans residues 670-690; that stretch reads SVIIAIIGVLLFGKSLVMQPF. At 691-947 the chain is on the vacuolar side; it reads SEIAPLKVRF…LVVIKDKIQL (257 aa). N-linked (GlcNAc...) asparagine glycosylation is found at asparagine 742, asparagine 784, asparagine 801, and asparagine 833.

This sequence belongs to the peptidase M28 family. Requires Zn(2+) as cofactor.

The protein localises to the vacuole membrane. Its function is as follows. May be involved in vacuolar sorting and osmoregulation. The sequence is that of Vacuolar membrane protease from Candida glabrata (strain ATCC 2001 / BCRC 20586 / JCM 3761 / NBRC 0622 / NRRL Y-65 / CBS 138) (Yeast).